Here is a 251-residue protein sequence, read N- to C-terminus: 5'-nucleotidase SurE (251 aa).

Residues D8, D9, S39, and N90 each contribute to the a divalent metal cation site.

The protein belongs to the SurE nucleotidase family. It depends on a divalent metal cation as a cofactor.

Its subcellular location is the cytoplasm. The enzyme catalyses a ribonucleoside 5'-phosphate + H2O = a ribonucleoside + phosphate. Functionally, nucleotidase that shows phosphatase activity on nucleoside 5'-monophosphates. The polypeptide is 5'-nucleotidase SurE (Colwellia psychrerythraea (strain 34H / ATCC BAA-681) (Vibrio psychroerythus)).